The sequence spans 226 residues: Urease accessory protein UreF (226 aa).

The protein belongs to the UreF family. In terms of assembly, ureD, UreF and UreG form a complex that acts as a GTP-hydrolysis-dependent molecular chaperone, activating the urease apoprotein by helping to assemble the nickel containing metallocenter of UreC. The UreE protein probably delivers the nickel.

The protein resides in the cytoplasm. Its function is as follows. Required for maturation of urease via the functional incorporation of the urease nickel metallocenter. This is Urease accessory protein UreF from Burkholderia vietnamiensis (strain G4 / LMG 22486) (Burkholderia cepacia (strain R1808)).